The chain runs to 256 residues: Ribonuclease HII (256 aa).

The region spanning 72-256 (ALICGIDEVG…SFEPIKSMMK (185 aa)) is the RNase H type-2 domain. Residues aspartate 78, glutamate 79, and aspartate 170 each contribute to the a divalent metal cation site.

The protein belongs to the RNase HII family. Requires Mn(2+) as cofactor. The cofactor is Mg(2+).

The protein resides in the cytoplasm. The catalysed reaction is Endonucleolytic cleavage to 5'-phosphomonoester.. Endonuclease that specifically degrades the RNA of RNA-DNA hybrids. The sequence is that of Ribonuclease HII from Staphylococcus epidermidis (strain ATCC 12228 / FDA PCI 1200).